The chain runs to 87 residues: Small ribosomal subunit protein bS20 (87 aa).

It belongs to the bacterial ribosomal protein bS20 family.

Its function is as follows. Binds directly to 16S ribosomal RNA. The polypeptide is Small ribosomal subunit protein bS20 (Corynebacterium jeikeium (strain K411)).